A 595-amino-acid chain; its full sequence is Putative laccase-18 (595 aa).

Residues Met-1 to Ala-29 form the signal peptide. Plastocyanin-like domains are found at residues Met-37–Gly-153 and Lys-162–Ala-316. 2 N-linked (GlcNAc...) asparagine glycosylation sites follow: Asn-42 and Asn-48. Cu cation contacts are provided by His-87 and His-89. Residue Asn-121 is glycosylated (N-linked (GlcNAc...) asparagine). Cu cation contacts are provided by His-132 and His-134. N-linked (GlcNAc...) asparagine glycans are attached at residues Asn-206, Asn-345, Asn-382, Asn-402, Asn-409, Asn-439, and Asn-470. Residues Asp-429–Pro-571 form the Plastocyanin-like 3 domain. Positions 488, 491, 493, 550, 551, 552, 556, and 561 each coordinate Cu cation. The disordered stretch occupies residues Gly-570 to Pro-595.

It belongs to the multicopper oxidase family. Requires Cu cation as cofactor.

The protein localises to the secreted. Its subcellular location is the extracellular space. The protein resides in the apoplast. It catalyses the reaction 4 hydroquinone + O2 = 4 benzosemiquinone + 2 H2O. Lignin degradation and detoxification of lignin-derived products. The sequence is that of Putative laccase-18 (LAC18) from Oryza sativa subsp. indica (Rice).